The sequence spans 308 residues: D-alanine--D-alanine ligase (308 aa).

The 200-residue stretch at 103–302 (KTVMATAGVP…FDELVQWMVE (200 aa)) folds into the ATP-grasp domain. ATP is bound at residue 130–184 (MAPPYVIKPVADGSSVGVFIVTEDQAHPPQELFRDDWPHGEELLVEKYIAGRELT). Residues aspartate 252, glutamate 269, and asparagine 271 each contribute to the Mg(2+) site.

It belongs to the D-alanine--D-alanine ligase family. Mg(2+) serves as cofactor. The cofactor is Mn(2+).

It localises to the cytoplasm. The catalysed reaction is 2 D-alanine + ATP = D-alanyl-D-alanine + ADP + phosphate + H(+). Its pathway is cell wall biogenesis; peptidoglycan biosynthesis. In terms of biological role, cell wall formation. In Afipia carboxidovorans (strain ATCC 49405 / DSM 1227 / KCTC 32145 / OM5) (Oligotropha carboxidovorans), this protein is D-alanine--D-alanine ligase.